The following is a 49-amino-acid chain: Large ribosomal subunit protein bL33 (49 aa).

This sequence belongs to the bacterial ribosomal protein bL33 family.

In Leuconostoc citreum (strain KM20), this protein is Large ribosomal subunit protein bL33.